Reading from the N-terminus, the 520-residue chain is Cyclin-L2 (520 aa).

Ala2 carries the N-acetylalanine modification. Cyclin-like regions lie at residues 83–185 (ELIQ…RVLK) and 198–282 (KIIV…KILQ). The segment at 316-520 (LPGGTQVLDG…DHPGHSRHRR (205 aa)) is disordered. Residues Ser330, Ser338, Ser348, and Ser351 each carry the phosphoserine modification. The segment covering 357 to 367 (RRLEGAKKAKA) has biased composition (basic and acidic residues). Ser369 carries the post-translational modification Phosphoserine. Over residues 376 to 390 (KGRESRSRSRSREQS) the composition is skewed to basic and acidic residues. Positions 385–423 (RSREQSYSRSPSRSASPKRRKSDSGSTSGGSKSQSRSRS) are RS. Residues 408–436 (SGSTSGGSKSQSRSRSRSDSPPRQAPRSA) are compositionally biased toward low complexity. Over residues 441-454 (SEIRGSRKSKDCKY) the composition is skewed to basic and acidic residues. Residues 456-471 (QKPHKSRSRSSSRSRS) are compositionally biased toward basic residues. Basic and acidic residues-rich tracts occupy residues 472–481 (RSRERADNPG) and 489–514 (YYRDQRRERSRSYERTGRRYERDHPG).

This sequence belongs to the cyclin family. Cyclin L subfamily. Interacts with CDK11A, CDK11B, CDK12, CDK13 and POLR2A, the hyperphosphorylated C-terminal domain (CTD) of RNA polymerase II. May form a ternary complex with CDK11B and casein kinase II (CKII). Interacts with pre-mRNA-splicing factors, including at least SRSF1, SRSF2 AND SRSF7/SLU7. In terms of tissue distribution, widely expressed.

The protein localises to the nucleus speckle. It is found in the nucleus. The protein resides in the nucleoplasm. Involved in pre-mRNA splicing. May induce cell death, possibly by acting on the transcription and RNA processing of apoptosis-related factors. In Homo sapiens (Human), this protein is Cyclin-L2 (CCNL2).